The sequence spans 315 residues: Probable cell division protein WhiA (315 aa).

Positions 275–309 form a DNA-binding region, H-T-H motif; sequence TLKELGEMVSSGTVSKSGVNHRLRKIDEIADALRR.

Belongs to the WhiA family.

Its function is as follows. Involved in cell division and chromosome segregation. This is Probable cell division protein WhiA from Lysinibacillus sphaericus (strain C3-41).